Reading from the N-terminus, the 207-residue chain is Large ribosomal subunit protein uL4 (207 aa).

A disordered region spans residues 53-76; sequence NRSAVRGGGRKPWRQKGTGRARQG. Over residues 60–71 the composition is skewed to basic residues; sequence GGRKPWRQKGTG.

It belongs to the universal ribosomal protein uL4 family. Part of the 50S ribosomal subunit.

Its function is as follows. One of the primary rRNA binding proteins, this protein initially binds near the 5'-end of the 23S rRNA. It is important during the early stages of 50S assembly. It makes multiple contacts with different domains of the 23S rRNA in the assembled 50S subunit and ribosome. Forms part of the polypeptide exit tunnel. In Staphylococcus saprophyticus subsp. saprophyticus (strain ATCC 15305 / DSM 20229 / NCIMB 8711 / NCTC 7292 / S-41), this protein is Large ribosomal subunit protein uL4.